The chain runs to 335 residues: Oligopeptide transport ATP-binding protein OppD (335 aa).

Residues 18–267 enclose the ABC transporter domain; the sequence is LEVNDLRVTF…PVHPYSIGLL (250 aa). An ATP-binding site is contributed by 54-61; sequence GESGSGKS.

This sequence belongs to the ABC transporter superfamily. In terms of assembly, the complex is composed of two ATP-binding proteins (OppD and OppF), two transmembrane proteins (OppB and OppC) and a solute-binding protein (OppA).

The protein localises to the cell inner membrane. It carries out the reaction a [peptide](out) + ATP + H2O = a [peptide](in) + ADP + phosphate + H(+). It catalyses the reaction L-alanyl-gamma-D-glutamyl-meso-2,6-diaminopimelate(out) + ATP + H2O = L-alanyl-gamma-D-glutamyl-meso-2,6-diaminopimelate(in) + ADP + phosphate + H(+). In terms of biological role, part of the ABC transporter complex OppABCDF involved in the uptake of oligopeptides, including the cell wall murein tripeptide L-alanyl-gamma-D-glutamyl-meso-diaminopimelate. Responsible for energy coupling to the transport system. Plays an important nutritional role and is involved in the recycling of cell wall peptides. Binds ATP. The polypeptide is Oligopeptide transport ATP-binding protein OppD (Salmonella typhimurium (strain LT2 / SGSC1412 / ATCC 700720)).